The following is a 233-amino-acid chain: Small ribosomal subunit protein uS3 (233 aa).

A KH type-2 domain is found at 28-96; it reads EFADNLDSDF…LRKVVADIAG (69 aa).

This sequence belongs to the universal ribosomal protein uS3 family. In terms of assembly, part of the 30S ribosomal subunit. Forms a tight complex with proteins S10 and S14.

In terms of biological role, binds the lower part of the 30S subunit head. Binds mRNA in the 70S ribosome, positioning it for translation. The chain is Small ribosomal subunit protein uS3 from Shigella flexneri.